Here is an 83-residue protein sequence, read N- to C-terminus: Short neurotoxin VAN-10 (83 aa).

Residues 1–21 form the signal peptide; it reads MKTLLLTLVVVTIVCLDLGYT. Intrachain disulfides connect Cys24–Cys45, Cys38–Cys62, Cys64–Cys75, and Cys76–Cys81.

Belongs to the three-finger toxin family. Short-chain subfamily. Type I alpha-neurotoxin sub-subfamily. As to expression, expressed by the venom gland.

It is found in the secreted. Binds to muscle nicotinic acetylcholine receptor (nAChR) and inhibit acetylcholine from binding to the receptor, thereby impairing neuromuscular transmission. The chain is Short neurotoxin VAN-10 from Laticauda laticaudata (Blue-ringed sea krait).